Here is a 432-residue protein sequence, read N- to C-terminus: Beta-fructosidase (432 aa).

Residues 14–17 (WMND), glutamine 33, tryptophan 41, 74–75 (FS), tyrosine 92, 137–138 (RD), 188–190 (EIE), threonine 208, and tryptophan 260 contribute to the substrate site. The active site involves aspartate 17.

It belongs to the glycosyl hydrolase 32 family.

It carries out the reaction Hydrolysis of terminal non-reducing beta-D-fructofuranoside residues in beta-D-fructofuranosides.. Its function is as follows. Hydrolysis of sucrose, raffinose, inulin and levan. Specific for the fructose moiety and the beta-anomeric configuration of the glycosidic linkages of its substrates. The enzyme released fructose from sucrose and raffinose, and the fructose polymer inulin is hydrolyzed quantitatively in an exo-type fashion. This is Beta-fructosidase (bfrA) from Thermotoga maritima (strain ATCC 43589 / DSM 3109 / JCM 10099 / NBRC 100826 / MSB8).